The chain runs to 743 residues: Phosphoribosylformylglycinamidine synthase subunit PurL (743 aa).

The active site involves H54. The ATP site is built by Y57 and K96. Position 98 (E98) interacts with Mg(2+). Substrate contacts are provided by residues 99–102 and R121; that span reads SHNH. The active-site Proton acceptor is the H100. D122 lines the Mg(2+) pocket. Q245 is a binding site for substrate. D273 provides a ligand contact to Mg(2+). Residue 317–319 participates in substrate binding; the sequence is ESQ. Residues D500 and G537 each coordinate ATP. N538 serves as a coordination point for Mg(2+). S540 is a substrate binding site.

Belongs to the FGAMS family. As to quaternary structure, monomer. Part of the FGAM synthase complex composed of 1 PurL, 1 PurQ and 2 PurS subunits.

It localises to the cytoplasm. The catalysed reaction is N(2)-formyl-N(1)-(5-phospho-beta-D-ribosyl)glycinamide + L-glutamine + ATP + H2O = 2-formamido-N(1)-(5-O-phospho-beta-D-ribosyl)acetamidine + L-glutamate + ADP + phosphate + H(+). Its pathway is purine metabolism; IMP biosynthesis via de novo pathway; 5-amino-1-(5-phospho-D-ribosyl)imidazole from N(2)-formyl-N(1)-(5-phospho-D-ribosyl)glycinamide: step 1/2. Part of the phosphoribosylformylglycinamidine synthase complex involved in the purines biosynthetic pathway. Catalyzes the ATP-dependent conversion of formylglycinamide ribonucleotide (FGAR) and glutamine to yield formylglycinamidine ribonucleotide (FGAM) and glutamate. The FGAM synthase complex is composed of three subunits. PurQ produces an ammonia molecule by converting glutamine to glutamate. PurL transfers the ammonia molecule to FGAR to form FGAM in an ATP-dependent manner. PurS interacts with PurQ and PurL and is thought to assist in the transfer of the ammonia molecule from PurQ to PurL. In Bacillus pumilus (strain SAFR-032), this protein is Phosphoribosylformylglycinamidine synthase subunit PurL.